The primary structure comprises 218 residues: N-(5'-phosphoribosyl)anthranilate isomerase (218 aa).

Belongs to the TrpF family.

It catalyses the reaction N-(5-phospho-beta-D-ribosyl)anthranilate = 1-(2-carboxyphenylamino)-1-deoxy-D-ribulose 5-phosphate. It participates in amino-acid biosynthesis; L-tryptophan biosynthesis; L-tryptophan from chorismate: step 3/5. The protein is N-(5'-phosphoribosyl)anthranilate isomerase of Bordetella bronchiseptica (strain ATCC BAA-588 / NCTC 13252 / RB50) (Alcaligenes bronchisepticus).